The primary structure comprises 71 residues: uncharacterized protein (71 aa).

Residues 2–24 form a helical membrane-spanning segment; that stretch reads IIAIVAVVIFLLNFLTPYGYMPM. Residues 48–71 are disordered; the sequence is PAESSSNGGSMITKPSTGACQGGR. The segment covering 49 to 71 has biased composition (polar residues); sequence AESSSNGGSMITKPSTGACQGGR.

The protein resides in the membrane. This is an uncharacterized protein from Archaeoglobus fulgidus (strain ATCC 49558 / DSM 4304 / JCM 9628 / NBRC 100126 / VC-16).